The following is a 437-amino-acid chain: tRNA-2-methylthio-N(6)-dimethylallyladenosine synthase (437 aa).

One can recognise an MTTase N-terminal domain in the interval 1-115; the sequence is MKVYIETMGC…ISQVIHKEKA (115 aa). Residues Cys-10, Cys-46, Cys-78, Cys-148, Cys-152, and Cys-155 each contribute to the [4Fe-4S] cluster site. The region spanning 134 to 367 is the Radical SAM core domain; the sequence is KKAQIRSLLN…QNRHKEILEE (234 aa). A TRAM domain is found at 370 to 436; the sequence is KLEVGKTHVV…KGRLMATTKG (67 aa).

The protein belongs to the methylthiotransferase family. MiaB subfamily. In terms of assembly, monomer. Requires [4Fe-4S] cluster as cofactor.

The protein resides in the cytoplasm. The catalysed reaction is N(6)-dimethylallyladenosine(37) in tRNA + (sulfur carrier)-SH + AH2 + 2 S-adenosyl-L-methionine = 2-methylsulfanyl-N(6)-dimethylallyladenosine(37) in tRNA + (sulfur carrier)-H + 5'-deoxyadenosine + L-methionine + A + S-adenosyl-L-homocysteine + 2 H(+). Catalyzes the methylthiolation of N6-(dimethylallyl)adenosine (i(6)A), leading to the formation of 2-methylthio-N6-(dimethylallyl)adenosine (ms(2)i(6)A) at position 37 in tRNAs that read codons beginning with uridine. This is tRNA-2-methylthio-N(6)-dimethylallyladenosine synthase from Helicobacter pylori (strain J99 / ATCC 700824) (Campylobacter pylori J99).